Consider the following 182-residue polypeptide: Vacuolar protein sorting-associated protein 29 (182 aa).

K50 is subject to N6-acetyllysine.

This sequence belongs to the VPS29 family. Component of the commander complex consisting of the CCC subcomplex and the retriever subcomplex. Component of the heterotrimeric retriever complex formed by VPS26C, VPS29 and VPS35L; within the complex interacts with VPS35L. Component of the heterotrimeric retromer cargo-selective complex (CSC), also described as vacuolar protein sorting subcomplex (VPS), formed by VPS26 (VPS26A or VPS26B), VPS29 and VPS35. The CSC has a highly elongated structure with VPS26 and VPS29 binding independently at opposite distal ends of VPS35 as central platform. The CSC is believed to associate with variable sorting nexins to form functionally distinct retromer complex variants. The originally described retromer complex (also called SNX-BAR retromer) is a pentamer containing the CSC and a heterodimeric membrane-deforming subcomplex formed between SNX1 or SNX2 and SNX5 or SNX6 (also called SNX-BAR subcomplex); the respective CSC and SNX-BAR subcomplexes associate with low affinity. The CSC associates with SNX3 to form a SNX3-retromer complex. The CSC associates with SNX27, the WASH complex and the SNX-BAR subcomplex to form the SNX27-retromer complex. Interacts with VPS26A, VPS35, SNX1, SNX2, SNX3, SNX27, WASHC5. Interacts with TBC1D5; this interaction is blocked by VPS35L in the retriever complex. Interacts with SNX17; the interaction is indirect; SNX17 (via its C-terminus) interacts with the retriever complex (via VPS26C and VPS35L). Interacts with VPS26B and ANKRD27.

The protein resides in the cytoplasm. It is found in the membrane. Its subcellular location is the endosome membrane. The protein localises to the early endosome. It localises to the late endosome. Its function is as follows. Component of the commander complex that is essential for endosomal recycling of transmembrane cargos; the commander complex is composed of the CCC subcomplex and the retriever subcomplex. Component of the retriever complex, which is a heterotrimeric complex related to retromer cargo-selective complex (CSC) and essential for retromer-independent retrieval and recycling of numerous cargos such as integrin alpha-5/beta-1 (ITGA5:ITGB1). Component of the retromer cargo-selective complex (CSC). The CSC is believed to be the core functional component of retromer or respective retromer complex variants acting to prevent missorting of selected transmembrane cargo proteins into the lysosomal degradation pathway. The recruitment of the CSC to the endosomal membrane involves RAB7A and SNX3. The SNX-BAR retromer mediates retrograde transport of cargo proteins from endosomes to the trans-Golgi network (TGN) and is involved in endosome-to-plasma membrane transport for cargo protein recycling. The SNX3-retromer mediates the retrograde endosome-to-TGN transport of WLS distinct from the SNX-BAR retromer pathway. The SNX27-retromer is believed to be involved in endosome-to-plasma membrane trafficking and recycling of a broad spectrum of cargo proteins. The CSC seems to act as recruitment hub for other proteins, such as the WASH complex and TBC1D5. Required to regulate transcytosis of the polymeric immunoglobulin receptor (pIgR-pIgA). In the endosomes, retriever complex drives the retrieval and recycling of NxxY-motif-containing cargo proteins by coupling to SNX17, a cargo essential for the homeostatic maintenance of numerous cell surface proteins associated with processes that include cell migration, cell adhesion, nutrient supply and cell signaling. The recruitment of the retriever complex to the endosomal membrane involves CCC and WASH complexes. Involved in GLUT1 endosome-to-plasma membrane trafficking; the function is dependent of association with ANKRD27. The polypeptide is Vacuolar protein sorting-associated protein 29 (Rattus norvegicus (Rat)).